The primary structure comprises 493 residues: Putative glycerol-3-phosphate transporter 5 (493 aa).

Transmembrane regions (helical) follow at residues 25-44 (FTFHQILVLIITFTAYASFH), 83-103 (LGELDLAFLSSYALGMYFAGH), 113-133 (FLVFGMMGSGILTLVFGLGYW), 145-165 (VQIVCGLFQSIGWPCVVSVVG), 185-205 (SVGNILGSVIASSVLDFGWGW), 207-227 (FVLPGVLVLVSGVVVFMFLVV), 292-312 (FCLFFSKLVAYTFLYWLPYYL), 328-348 (GILSTVFDVGGVLGGISAGFI), 352-372 (IKARALTSITFLALSIPALIM), 375-395 (VYGSVSMFINIVLMFISGLLV), 428-448 (AIIDGTGSVGAALGPLLAGYI), and 452-472 (GWNSVFFMLIVSIFFAGLFLV).

This sequence belongs to the major facilitator superfamily. Organophosphate:Pi antiporter (OPA) (TC 2.A.1.4) family.

The protein resides in the membrane. The protein is Putative glycerol-3-phosphate transporter 5 of Arabidopsis thaliana (Mouse-ear cress).